Reading from the N-terminus, the 596-residue chain is Meiosis-specific protein ASY1 (596 aa).

In terms of domain architecture, HORMA spans 15 to 228; sequence QDSLLLTRNL…SKHLVLTLKV (214 aa). A disordered region spans residues 235-303; the sequence is CEDENDDMQD…NTQDPAENEQ (69 aa). Positions 282-295 are enriched in acidic residues; that stretch reads QDDDDGEVDEDDNT. The 99-residue stretch at 351-449 folds into the SWIRM domain; the sequence is SKTGKDMYIK…ASSNRRLGKR (99 aa). The tract at residues 562-596 is disordered; that stretch reads TVNCSQASQDRRGRKTSMVREPILQYSKRQKSQAN.

As to quaternary structure, interacts with ASY3.

The protein localises to the chromosome. The protein resides in the nucleus. Required for normal meiosis in male and female gametophytes. Plays a crucial role in coordinating the activity of DMC1, a key member of the homologous recombination machinery. Acts at the interface between the developing chromosome axes and the recombination machinery to ensure DMC1-mediated interhomolog recombination. The polypeptide is Meiosis-specific protein ASY1 (Arabidopsis thaliana (Mouse-ear cress)).